Consider the following 864-residue polypeptide: DNA mismatch repair protein MutS (864 aa).

Position 607 to 614 (607 to 614) interacts with ATP; the sequence is GPNMGGKS.

Belongs to the DNA mismatch repair MutS family.

In terms of biological role, this protein is involved in the repair of mismatches in DNA. It is possible that it carries out the mismatch recognition step. This protein has a weak ATPase activity. This Neisseria meningitidis serogroup C / serotype 2a (strain ATCC 700532 / DSM 15464 / FAM18) protein is DNA mismatch repair protein MutS.